The following is a 307-amino-acid chain: Protease HtpX homolog (307 aa).

2 helical membrane passes run 7-27 (AILL…IGGA) and 28-48 (SGAT…YWNS). Position 130 (His-130) interacts with Zn(2+). The active site involves Glu-131. Zn(2+) is bound at residue His-134. A run of 2 helical transmembrane segments spans residues 145 to 165 (ITAT…FFGG) and 171 to 191 (GPGI…AMLV). Glu-200 lines the Zn(2+) pocket. The tract at residues 277-307 (AGQSGGGLAPGGPPPDPSSPWNKGSRRGPWG) is disordered.

The protein belongs to the peptidase M48B family. The cofactor is Zn(2+).

It is found in the cell inner membrane. In Nitrobacter winogradskyi (strain ATCC 25391 / DSM 10237 / CIP 104748 / NCIMB 11846 / Nb-255), this protein is Protease HtpX homolog.